The chain runs to 237 residues: Ribosomal RNA small subunit methyltransferase G (237 aa).

S-adenosyl-L-methionine contacts are provided by residues glycine 78, phenylalanine 83, 129–130 (AE), and arginine 148. A disordered region spans residues 218–237 (KKETPNKYPRKAGMPNKRPL).

This sequence belongs to the methyltransferase superfamily. RNA methyltransferase RsmG family.

The protein resides in the cytoplasm. Specifically methylates the N7 position of a guanine in 16S rRNA. The protein is Ribosomal RNA small subunit methyltransferase G of Streptococcus sanguinis (strain SK36).